The chain runs to 92 residues: Small ribosomal subunit protein uS19c (92 aa).

It belongs to the universal ribosomal protein uS19 family.

The protein localises to the plastid. It localises to the chloroplast. Protein S19 forms a complex with S13 that binds strongly to the 16S ribosomal RNA. This chain is Small ribosomal subunit protein uS19c, found in Rhodomonas salina (Cryptomonas salina).